The sequence spans 961 residues: Zinc finger protein basonuclin-1 (961 aa).

Positions 210-219 (MTFMLPFQFF) are hydrophobic. 2 consecutive C2H2-type zinc fingers follow at residues 325-348 (VFCT…NAVH) and 353-382 (HKCT…PRLH). Residues 370-393 (RNRHSANPNPRLHMPMNRNNRDKD) are disordered. The Nuclear localization signal signature appears at 501-507 (PKKKSRK). Phosphoserine occurs at positions 505 and 509. The interval 523 to 572 (EEKRHSLSSDDEVPLQVVSEDEPEDSSPRSDRVPEEQHTQLSLEEPLPQG) is disordered. Residues 531 to 547 (SDDEVPLQVVSEDEPED) show a composition bias toward acidic residues. A compositionally biased stretch (basic and acidic residues) spans 548–560 (SSPRSDRVPEEQH). 2 consecutive C2H2-type zinc fingers follow at residues 687 to 711 (FQCD…NTHA) and 715 to 743 (HACT…SLHQ). The interval 810–864 (ESYNSGPPSEGTILDLSTTSSMKSESSSHSSWDSDGVSEEGTALMEDSDGNCEGQ) is disordered. Residues 826–844 (STTSSMKSESSSHSSWDSD) are compositionally biased toward low complexity. C2H2-type zinc fingers lie at residues 895-918 (ITCH…KTVH) and 923-950 (HKCK…PNLH). A disordered region spans residues 937–961 (VRSRNRHSQNPNLHKSLASSPSHLQ).

Interacts with HSF2BP (via C-terminus). Phosphorylation on Ser-505 and Ser-509 leads to cytoplasmic localization. Epidermis and germ cells of testis and ovary.

The protein resides in the nucleus. The protein localises to the cytoplasm. It is found in the nucleoplasm. In terms of biological role, transcriptional activator. It is likely involved in the regulation of keratinocytes terminal differentiation in squamous epithelia and hair follicles. Required for the maintenance of spermatogenesis. It is involved in the positive regulation of oocyte maturation, probably acting through the control of BMP15 levels and regulation of AKT signaling cascade. May also play a role in the early development of embryos. This Mus musculus (Mouse) protein is Zinc finger protein basonuclin-1 (Bnc1).